The sequence spans 610 residues: Granule-bound starch synthase 1, chloroplastic/amyloplastic (610 aa).

The transit peptide at Met1–Val79 directs the protein to the chloroplast. Lys98 serves as a coordination point for ADP-alpha-D-glucose. Residues Thr438–Phe454 adopt a coiled-coil conformation.

The protein belongs to the glycosyltransferase 1 family. Bacterial/plant glycogen synthase subfamily. In terms of assembly, interacts with PTST. This interaction is critical for the localization to starch granules. As to expression, expressed in roots, inflorescences, flowers, fruits and at much higher levels in leaves.

The protein resides in the plastid. It is found in the chloroplast. The enzyme catalyses an NDP-alpha-D-glucose + [(1-&gt;4)-alpha-D-glucosyl](n) = [(1-&gt;4)-alpha-D-glucosyl](n+1) + a ribonucleoside 5'-diphosphate + H(+). Its pathway is glycan biosynthesis; starch biosynthesis. Required for the synthesis of amylose. Destroyed as it is released from the starch granules during the night. The circadian expression is controlled by CCA1 and LHY transcription factors. In Arabidopsis thaliana (Mouse-ear cress), this protein is Granule-bound starch synthase 1, chloroplastic/amyloplastic.